We begin with the raw amino-acid sequence, 7182 residues long: Replicase polyprotein 1ab (7182 aa).

The region spanning 54–174 (YDNHVKIDCR…HKWFQFCRLY (121 aa)) is the CoV Nsp1 globular domain. The region spanning 192-222 (FSVEDAYAEVHAEPKGKYSQKAYALLRQYRG) is the BetaCoV Nsp1 C-terminal domain. In terms of domain architecture, CoV Nsp2 N-terminal spans 226–488 (VLFVDQYGCD…LITHALYLDY (263 aa)). 4 residues coordinate Zn(2+): cysteine 365, cysteine 370, cysteine 386, and cysteine 389. The interval 365–389 (CFNDNCDFYGWVSGNMMDGFSCPLC) is C4. The CoV Nsp2 middle domain maps to 493-681 (CGNLEQNHIL…VNKFYTFFKL (189 aa)). A CoV Nsp2 C-terminal domain is found at 697–809 (LKTINGLVCI…LDQAWRFPCA (113 aa)). A Ubiquitin-like 1 domain is found at 811–923 (RKVNFNEKPV…MYCTFAIEDV (113 aa)). 14 repeat units span residues 945 to 954 (NDDEDVVTGD), 955 to 964 (NDDEDVVTGD), 965 to 974 (NDDEDVVTGD), 975 to 984 (NDDEDVVTGD), 985 to 994 (NDDEDVVTGD), 995 to 1004 (NDDEDVVTGD), 1005 to 1014 (NDDEDVVTGD), 1015 to 1024 (NDDEDVVTGD), 1025 to 1034 (NDDEDVVTGD), 1035 to 1044 (NDDEDVVTGD), 1045 to 1054 (NDDEDVVTGD), 1055 to 1064 (NDDEDVVTGD), 1065 to 1074 (NDDEDVVTGD), and 1075 to 1084 (NDDEDVVTGD). Residues 945–1084 (NDDEDVVTGD…NDDEDVVTGD (140 aa)) are 14 X 10 AA tandem repeat of N-[DN]-D-E-D-V-V-T-G-D. Residues 946–1064 (DDEDVVTGDN…NDDEDVVTGD (119 aa)) are disordered. One can recognise a Peptidase C16 1 domain in the interval 1123 to 1373 (VFNDVYNDAL…VCFVKGDIIN (251 aa)). Cysteine 1161 functions as the For PL1-PRO activity in the catalytic mechanism. Cysteine 1238, cysteine 1241, cysteine 1264, and cysteine 1266 together coordinate Zn(2+). The C4-type 1 zinc finger occupies 1238-1266 (CLKCGFSFDLNGLDALFFYGDIVSHVCKC). Catalysis depends on for PL1-PRO activity residues histidine 1312 and aspartate 1323. In terms of domain architecture, Macro spans 1351 to 1522 (ELPQLYGLCI…IIQKCQITSV (172 aa)). One can recognise a DPUP domain in the interval 1578 to 1649 (NDVRDYLLSK…TVNQVCVLLA (72 aa)). A Ubiquitin-like 2 domain is found at 1649–1704 (AKKIDVLLTVDGVNFKSISLTVGEVFGKILGNVFCDGIDVTKLKCSDFYADKILYQ). In terms of domain architecture, Peptidase C16 2 spans 1718–1978 (SSFGFDQQQL…MVAYNPDLSQ (261 aa)). The active-site For PL2-PRO activity is the cysteine 1757. 4 residues coordinate Zn(2+): cysteine 1835, cysteine 1837, cysteine 1869, and cysteine 1871. Residues 1835 to 1871 (CDCGIKQESRVGVDAVMHFGTLAKTDLFNGYKIGCNC) form a C4-type 2 zinc finger. Active-site for PL2-PRO activity residues include histidine 1914 and aspartate 1928. In terms of domain architecture, Nucleic acid-binding spans 1992-2093 (IKAQFKPFAK…TYFNKPSFKS (102 aa)). In terms of domain architecture, G2M spans 2108 to 2257 (ESQGNVVTSV…NDKTIFYTTE (150 aa)). 3 consecutive transmembrane segments (helical) span residues 2226–2246 (AIEFYGFLKWLFIYVFSLLHF), 2287–2307 (FLVVATVFLFWFNFLYINVIF), and 2318–2338 (FPIFVGRIVMWIKATFGLVTI). Residues 2226–2463 (AIEFYGFLKW…FVLLRFYIVV (238 aa)) form an HD1 region. Residues 2323–2384 (GRIVMWIKAT…AIDFVQYEVD (62 aa)) enclose the 3Ecto domain. Disulfide bonds link cysteine 2339/cysteine 2363 and cysteine 2354/cysteine 2360. 2 consecutive transmembrane segments (helical) span residues 2401-2421 (LVIGYSLYTVWFYPLFCLIGL) and 2443-2463 (FIVFVANMLPAFVLLRFYIVV). The Y1 stretch occupies residues 2471 to 2561 (GFIRHIVYGC…ELKRPVNPTD (91 aa)). Residues 2471 to 2838 (GFIRHIVYGC…LTTPFSLKGG (368 aa)) form the CoV Nsp3 Y domain. The Zn(2+) site is built by histidine 2475, cysteine 2480, cysteine 2485, cysteine 2488, cysteine 2521, histidine 2524, cysteine 2528, and cysteine 2531. The segment at 2475–2488 (HIVYGCNKAGCLFC) is ZF1. The segment at 2521-2531 (CVKHQWNCFNC) is ZF2. The tract at residues 2562–2654 (ASHYVVTDIK…LVDKKLITTA (93 aa)) is Y2. The interval 2562 to 2838 (ASHYVVTDIK…LTTPFSLKGG (277 aa)) is coV-Y. Positions 2655 to 2737 (CNGISVTQTM…KSMISAVAAG (83 aa)) are Y3. The tract at residues 2738-2838 (LEFTDENYNN…LTTPFSLKGG (101 aa)) is Y4. A run of 5 helical transmembrane segments spans residues 2844 to 2864 (LLYILFFVSLICFILLWALLP), 3119 to 3139 (ASSIFGAILAIVVVLVFYYLI), 3151 to 3171 (VVVINVVVWCINFLMLFVFQV), 3178 to 3198 (VYACFYFYVTLYFPSEISVIM), and 3203 to 3223 (IVMYGAIMPFWFCVTYVAMVI). The segment at 2844 to 3223 (LLYILFFVSL…FCVTYVAMVI (380 aa)) is HD2. The region spanning 3237-3334 (IGVNVCSDST…TASVSTSFLQ (98 aa)) is the Nsp4C domain. The 303-residue stretch at 3335-3637 (SGIVKMVSPT…YQQLAGVKLQ (303 aa)) folds into the Peptidase C30 domain. Catalysis depends on for 3CL-PRO activity residues histidine 3375 and cysteine 3479. 7 consecutive transmembrane segments (helical) span residues 3651-3671 (ILISTFLFSCIISAFVKWTIF), 3676-3696 (THMIGVTLCVLCFVSFMMLLV), 3701-3721 (FYLTMYIIPVLCTLFYVNYLV), 3744-3764 (FTYVYEVFYGCILCVFAIFIT), 3772-3792 (IFSLMFLVGRIVTLISMWYFG), 3800-3820 (LLFITAFLGTYTWTTILSLAI), and 3843-3863 (LILLSYLFIGYILSCYWGFFS). Residues 3651-3863 (ILISTFLFSC…ILSCYWGFFS (213 aa)) form an HD3 region. The RdRp Nsp7 cofactor domain occupies 3925–4013 (SKLTDVKCAN…DYVQDSTVLQ (89 aa)). The RdRp Nsp8 cofactor domain maps to 4014–4210 (ALQSEFVNMA…YNEVANAVMQ (197 aa)). The Nsp9 ssRNA-binding domain occupies 4211 to 4320 (NNELMPHKLK…GTLSSTIRLQ (110 aa)). One can recognise an ExoN/MTase coactivator domain in the interval 4321-4458 (AGVATEYAAN…CVGSSVAVQS (138 aa)). Positions 4394, 4397, 4403, 4410, 4436, 4439, 4447, and 4449 each coordinate Zn(2+). 2 zinc fingers span residues 4394–4410 (CIYCRARVEHPDVDGIC) and 4436–4449 (CQVCGFWRDGSCSC). Positions 4463–4718 (FLNRVRGTSV…DCELFVNDSY (256 aa)) constitute a NiRAN domain. Mn(2+)-binding residues include asparagine 4666 and aspartate 4675. A Nsp12 Interface domain is found at 4719–4817 (RQFDLVQYDF…MNLDVDTHRY (99 aa)). 5 residues coordinate Zn(2+): histidine 4748, cysteine 4754, cysteine 4759, cysteine 4763, and cysteine 4940. A Nsp12 RNA-dependent RNA polymerase domain is found at 4818 to 5385 (RLSLKDLLLY…NMYLKSAVMQ (568 aa)). The tract at residues 4820-5034 (SLKDLLLYAA…HQKCLKSIAA (215 aa)) is rdRp Fingers N-ter. The rdRp Palm N-ter stretch occupies residues 5035-5073 (TRGVPVVIGTTKFYGGWDDMLRHLIKDVDNPVLMGWDYP). The RdRp catalytic domain maps to 5065–5227 (PVLMGWDYPK…CYNSDYASKG (163 aa)). Residues 5074-5132 (KCDRAMPNILRIVSSLVLARKHEFCCSHGDRFYRLANECAQVLSEIVMCGGCYYVKPGG) are rdRp Fingers C-ter. Zn(2+) contacts are provided by histidine 5095, cysteine 5098, and cysteine 5099. The rdRp Palm C-ter stretch occupies residues 5133-5268 (TSSGDATTAF…TNGPHEFCSQ (136 aa)). Residues serine 5212, aspartate 5213, and aspartate 5214 contribute to the active site. The tract at residues 5269 to 5385 (HTMLVKIDGD…NMYLKSAVMQ (117 aa)) is rdRp Thumb. The CV ZBD domain occupies 5386 to 5498 (SVGACVVCSS…DDFNKIASCK (113 aa)). Residues cysteine 5390, cysteine 5393, cysteine 5401, cysteine 5404, cysteine 5411, cysteine 5414, histidine 5418, histidine 5424, cysteine 5435, cysteine 5440, cysteine 5457, and histidine 5460 each coordinate Zn(2+). The (+)RNA virus helicase ATP-binding domain maps to 5641 to 5822 (SVPLVFQNNV…MCCLGPDIFL (182 aa)). ATP is bound at residue 5666–5673 (GPPGTGKS). In terms of domain architecture, (+)RNA virus helicase C-terminal spans 5823–5992 (GNCYRCPKEI…TLPRLHCTTN (170 aa)). One can recognise an ExoN domain in the interval 6059–6274 (LFITKDEAIK…RCLAIYDCFC (216 aa)). Residues aspartate 6077, glutamate 6079, and glutamate 6178 contribute to the active site. Zn(2+) contacts are provided by cysteine 6194, cysteine 6197, cysteine 6213, histidine 6216, histidine 6244, cysteine 6248, and histidine 6251. Active-site residues include histidine 6255 and aspartate 6260. Position 6266 (cysteine 6266) interacts with Zn(2+). Positions 6283-6509 (YPIISNEVSI…NLWNTFTTLQ (227 aa)) constitute an N7-MTase domain. Residue 6318-6324 (DIGNPKG) coordinates S-adenosyl-L-methionine. The segment at 6396-6410 (CNGGSLYVNKHAFHT) is gpppA-binding. Residues cysteine 6434, cysteine 6455, cysteine 6466, and histidine 6469 each coordinate Zn(2+). The Nsp15 N-terminal oligomerization domain maps to 6510 to 6570 (SLENVIYNLV…NIAVELFTKR (61 aa)). An AV-Nsp11N/CoV-Nsp15M domain is found at 6571–6691 (SIRHHPELKI…FAMRKDGDDV (121 aa)). In terms of domain architecture, NendoU spans 6741–6880 (EPRSDLERDF…NDNKIMTFYP (140 aa)). Catalysis depends on residues histidine 6771, histidine 6786, lysine 6826, lysine 6929, aspartate 7013, lysine 7053, and glutamate 7086. One can recognise a Nidovirus-type SAM-dependent 2'-O-MTase domain in the interval 6885–7179 (TNDWKPGYSM…KEIFVGDSLV (295 aa)).

This sequence belongs to the coronaviruses polyprotein 1ab family. In terms of assembly, interacts with host PHB and PHB2. Interacts with papain-like protease nsp3 and non-structural protein 6. As to quaternary structure, monomer. Homodimer. Only the homodimer shows catalytic activity. In terms of assembly, interacts with nsp8 and nsp12 to form the replication-transcription complex (RTC): nsp12, nsp7, two subunits of nsp8, and up to two subunits of nsp13. Interacts with nsp7, nsp13 and nsp12 to form the replication-transcription complex (RTC): nsp12, nsp7, two subunits of nsp8, and up to two subunits of nsp13. As to quaternary structure, interacts with nsp12. In terms of assembly, interacts with proofreading exoribonuclease nsp14 and 2'-O-methyltransferase nsp16; these interactions enhance nsp14 and nsp16 enzymatic activities. Interacts with nsp7 and nsp8 to form the replication-transcription complex (RTC): nsp12, nsp7, two subunits of nsp8, and up to two subunits of nsp13. Interacts with nsp9. As to quaternary structure, interacts with nsp8 to form the replication-transcription complex (RTC): nsp12, nsp7, two subunits of nsp8, and up to two subunits of nsp13. It depends on Mn(2+) as a cofactor. Mg(2+) is required as a cofactor. Specific enzymatic cleavages in vivo by its own proteases yield mature proteins. 3CL-PRO and PL-PRO proteinases are autocatalytically processed.

It is found in the host membrane. Its subcellular location is the host cytoplasm. The protein resides in the host perinuclear region. It localises to the host endoplasmic reticulum-Golgi intermediate compartment. It carries out the reaction RNA(n) + a ribonucleoside 5'-triphosphate = RNA(n+1) + diphosphate. It catalyses the reaction ATP + H2O = ADP + phosphate + H(+). The enzyme catalyses Thiol-dependent hydrolysis of ester, thioester, amide, peptide and isopeptide bonds formed by the C-terminal Gly of ubiquitin (a 76-residue protein attached to proteins as an intracellular targeting signal).. The catalysed reaction is a 5'-end (N(7)-methyl 5'-triphosphoguanosine)-ribonucleoside in mRNA + S-adenosyl-L-methionine = a 5'-end (N(7)-methyl 5'-triphosphoguanosine)-(2'-O-methyl-ribonucleoside) in mRNA + S-adenosyl-L-homocysteine + H(+). It carries out the reaction uridylyl-uridylyl-ribonucleotide-RNA = a 3'-end uridylyl-2',3'-cyclophospho-uridine-RNA + a 5'-end dephospho-ribonucleoside-RNA. It catalyses the reaction a 5'-end diphospho-ribonucleoside in mRNA + GTP + H(+) = a 5'-end (5'-triphosphoguanosine)-ribonucleoside in mRNA + diphosphate. The enzyme catalyses a 5'-end (5'-triphosphoguanosine)-ribonucleoside in mRNA + S-adenosyl-L-methionine = a 5'-end (N(7)-methyl 5'-triphosphoguanosine)-ribonucleoside in mRNA + S-adenosyl-L-homocysteine. Its function is as follows. The replicase polyprotein of coronaviruses is a multifunctional protein: it contains the activities necessary for the transcription of negative stranded RNA, leader RNA, subgenomic mRNAs and progeny virion RNA as well as proteinases responsible for the cleavage of the polyprotein into functional products. Inhibits host translation by interacting with the 40S ribosomal subunit. The nsp1-40S ribosome complex further induces an endonucleolytic cleavage near the 5'UTR of host mRNAs, targeting them for degradation. Viral mRNAs are not susceptible to nsp1-mediated endonucleolytic RNA cleavage thanks to the presence of a 5'-end leader sequence and are therefore protected from degradation. By suppressing host gene expression, nsp1 facilitates efficient viral gene expression in infected cells and evasion from host immune response. Functionally, may play a role in the modulation of host cell survival signaling pathway by interacting with host PHB and PHB2. Indeed, these two proteins play a role in maintaining the functional integrity of the mitochondria and protecting cells from various stresses. In terms of biological role, responsible for the cleavages located at the N-terminus of the replicase polyprotein. In addition, PL-PRO possesses a deubiquitinating/deISGylating activity and processes both 'Lys-48'- and 'Lys-63'-linked polyubiquitin chains from cellular substrates. Participates together with nsp4 in the assembly of virally-induced cytoplasmic double-membrane vesicles necessary for viral replication. Antagonizes innate immune induction of type I interferon by blocking the phosphorylation, dimerization and subsequent nuclear translocation of host IRF3. Also prevents host NF-kappa-B signaling. Its function is as follows. Participates in the assembly of virally-induced cytoplasmic double-membrane vesicles necessary for viral replication. Cleaves the C-terminus of replicase polyprotein at 11 sites. Recognizes substrates containing the core sequence [ILMVF]-Q-|-[SGACN]. Also able to bind an ADP-ribose-1''-phosphate (ADRP). Functionally, plays a role in the initial induction of autophagosomes from host endoplasmic reticulum. Later, limits the expansion of these phagosomes that are no longer able to deliver viral components to lysosomes. In terms of biological role, forms a hexadecamer with nsp8 (8 subunits of each) that may participate in viral replication by acting as a primase. Alternatively, may synthesize substantially longer products than oligonucleotide primers. Its function is as follows. Forms a hexadecamer with nsp7 (8 subunits of each) that may participate in viral replication by acting as a primase. Alternatively, may synthesize substantially longer products than oligonucleotide primers. Forms a primer, NSP9-pU, which is utilized by the polymerase for the initiation of RNA chains. Interacts with ribosome signal recognition particle RNA (SRP). Together with NSP8, suppress protein integration into the cell membrane, thereby disrupting host immune defenses. Functionally, plays a pivotal role in viral transcription by stimulating both nsp14 3'-5' exoribonuclease and nsp16 2'-O-methyltransferase activities. Therefore plays an essential role in viral mRNAs cap methylation. In terms of biological role, RNA-directed RNA polymerase that catalyzes the transcription of viral genomic and subgenomic RNAs. Acts in complex with nsp7 and nsp8 to transcribe both the minus and positive strands of genomic RNA. The kinase-like NiRAN domain of NSP12 attaches one or more nucleotides to the amino terminus of NSP9, forming a covalent RNA-protein intermediate that serves as transcription/replication primer. Subgenomic RNAs (sgRNAs) are formed by discontinuous transcription: The polymerase has the ability to pause at transcription-regulating sequences (TRS) and jump to the leader TRS, resulting in a major deletion. This creates a series of subgenomic RNAs that are replicated, transcribed and translated. In addition, Nsp12 is a subunit of the viral RNA capping enzyme that catalyzes the RNA guanylyltransferase reaction for genomic and sub-genomic RNAs. Subsequently, the NiRAN domain transfers RNA to GDP, and forms the core cap structure GpppA-RNA. Its function is as follows. Multi-functional protein with a zinc-binding domain in N-terminus displaying RNA and DNA duplex-unwinding activities with 5' to 3' polarity. Activity of helicase is dependent on magnesium. Plays a role in viral RNA synthesis through two distinct activities. The N7-guanine methyltransferase activity plays a role in the formation of the cap structure GpppA-RNA. The proofreading exoribonuclease reduces the sensitivity of the virus to RNA mutagens during replication. This activity acts on both ssRNA and dsRNA in a 3'-5' direction. Functionally, plays a role in viral transcription/replication and prevents the simultaneous activation of host cell dsRNA sensors, such as MDA5/IFIH1, OAS, and PKR. Acts by degrading the 5'-polyuridines generated during replication of the poly(A) region of viral genomic and subgenomic RNAs. Catalyzes a two-step reaction in which a 2'3'-cyclic phosphate (2'3'-cP) is first generated by 2'-O transesterification, which is then hydrolyzed to a 3'-phosphate (3'-P). If not degraded, poly(U) RNA would hybridize with poly(A) RNA tails and activate host dsRNA sensors. In terms of biological role, methyltransferase that mediates mRNA cap 2'-O-ribose methylation to the 5'-cap structure of viral mRNAs. N7-methyl guanosine cap is a prerequisite for binding of nsp16. Therefore plays an essential role in viral mRNAs cap methylation which is essential to evade immune system. The polypeptide is Replicase polyprotein 1ab (rep) (Human coronavirus HKU1 (isolate N1) (HCoV-HKU1)).